The following is a 222-amino-acid chain: Putative auxin response factor 23 (222 aa).

Positions 126 to 222 form a DNA-binding region, TF-B3; sequence FTKVLTASDT…ETGELRVGIR (97 aa).

The protein belongs to the ARF family. In terms of assembly, homo and heterodimers.

Its subcellular location is the nucleus. Functionally, auxin response factors (ARFs) are transcriptional factors that binds specifically to the DNA sequence 5'-TGTCTC-3' found in the auxin-responsive promoter elements (AuxREs). Could act as transcriptional activator or repressor. Formation of heterodimers with Aux/IAA proteins may alter their ability to modulate early auxin response genes expression. This is Putative auxin response factor 23 (ARF23) from Arabidopsis thaliana (Mouse-ear cress).